The sequence spans 179 residues: MESRKEKRAFLIGRFQPFHKGHLEIVKRILSENDSIIIGIGSAQYSHTVVNPFTAGERHLMISRTLEKERIYNYYLVPIEDVNANSLWVSHVEALTPKFDIVYTNNPLVRRLFMERKYEVRSLPMVNRKEWTGTKIREKMIAGEPWENDVPDPVVEVIHEIDGISRIRQLSTTDEDITQ.

Belongs to the archaeal NMN adenylyltransferase family.

The protein localises to the cytoplasm. The catalysed reaction is beta-nicotinamide D-ribonucleotide + ATP + H(+) = diphosphate + NAD(+). It participates in cofactor biosynthesis; NAD(+) biosynthesis; NAD(+) from nicotinamide D-ribonucleotide: step 1/1. The chain is Nicotinamide-nucleotide adenylyltransferase from Thermoplasma acidophilum (strain ATCC 25905 / DSM 1728 / JCM 9062 / NBRC 15155 / AMRC-C165).